The chain runs to 788 residues: Multi-functional prenyltransferase ltmE (788 aa).

2 residues coordinate substrate: lysine 18 and histidine 51. A Mg(2+)-binding site is contributed by aspartate 58. 6 residues coordinate substrate: arginine 67, lysine 151, threonine 152, glutamine 182, asparagine 189, and lysine 199. Residues 283–337 (DTLDGDDLTRPSTITQHEQDDHVDRAAIDAKSDASGSSNKSLTPPETAPTTDTLS) form a disordered region. A compositionally biased stretch (basic and acidic residues) spans 299 to 314 (HEQDDHVDRAAIDAKS). Positions 316-337 (ASGSSNKSLTPPETAPTTDTLS) are enriched in polar residues. 404 to 405 (MA) serves as a coordination point for L-tryptophan. 5 residues coordinate substrate: arginine 427, arginine 599, lysine 601, tyrosine 603, and tyrosine 687.

In the N-terminal section; belongs to the FPP/GGPP synthase family. It in the C-terminal section; belongs to the tryptophan dimethylallyltransferase family. Requires Mg(2+) as cofactor.

The protein operates within secondary metabolite biosynthesis. Functionally, multi-functional prenyltransferase; part of the gene cluster that mediates the biosynthesis of lolitrems, indole-diterpene mycotoxins that are potent tremorgens in mammals, and are synthesized by clavicipitaceous fungal endophytes in association with their grass hosts. The geranylgeranyl diphosphate (GGPP) synthase ltmG is proposed to catalyze the first step in lolitrem biosynthesis. LtmG catalyzes a series of iterative condensations of isopentenyl diphosphate (IPP) with dimethylallyl diphosphate (DMAPP), geranyl diphosphate (GPP), and farnesyl diphosphate (FPP), to form GGPP. GGPP then condenses with indole-3-glycerol phosphate to form 3-geranylgeranylindole, an acyclic intermediate, to be incorporated into paxilline. Either ltmG or ltmC could be responsible for this step, as both are putative prenyl transferases. The FAD-dependent monooxygenase ltmM then catalyzes the epoxidation of the two terminal alkenes of the geranylgeranyl moiety, which is subsequently cyclized by ltmB, to paspaline. The cytochrome P450 monooxygenases ltmQ and ltmP can sequentially oxidize paspaline to terpendole E and terpendole F. Alternatively, ltmP converts paspaline to an intermediate which is oxidized by ltmQ to terpendole F. LtmF, ltmK, ltmE and ltmJ appear to be unique to the epichloe endophytes. The prenyltransferase ltmF is involved in the 27-hydroxyl-O-prenylation. The cytochrome P450 monooxygenase ltmK is required for the oxidative acetal ring formation. The multi-functional prenyltransferase ltmE is required for C20- and C21-prenylations of the indole ring of paspalanes and acts together with the cytochrome P450 monooxygenase ltmJ to yield lolitremanes by multiple oxidations and ring closures. The stereoisomer pairs of lolitriol and lolitrem N or lolitrem B and lolitrem F may be attributed to variations in the way in which ring closure can occur under the action of ltmJ. While the major product of this pathway is lolitrem B, the prenyl transferases and cytochrome P450 monooxygenases identified in this pathway have a remarkable versatility in their regio- and stereo-specificities to generate a diverse range of metabolites that are products of a metabolic grid rather than a linear pathway. The chain is Multi-functional prenyltransferase ltmE from Epichloe festucae var. lolii (Neotyphodium lolii).